Here is a 300-residue protein sequence, read N- to C-terminus: Spermatogenesis-associated serine-rich protein 1 (300 aa).

Residues 1 to 10 (MSPSMLTGNS) are compositionally biased toward polar residues. Disordered stretches follow at residues 1–42 (MSPS…MTEV) and 64–91 (TPSG…LPRV). Basic and acidic residues predominate over residues 27–42 (QLEKVPEKRDSGMTEV). Over residues 64 to 85 (TPSGKSVSSSSSVETGPSVSEP) the composition is skewed to low complexity. S113 bears the Phosphoserine mark.

This chain is Spermatogenesis-associated serine-rich protein 1 (SPATS1), found in Homo sapiens (Human).